The following is a 564-amino-acid chain: E3 ubiquitin-protein ligase RNF168 (564 aa).

The RING-type zinc-finger motif lies at 16-55 (CGICMEILVEPVTLPCNHTLCNPCFQSTVEKANLCCPFCR). Ser70 carries the phosphoserine modification. An LR motif 1 motif is present at residues 110 to 128 (LSKPGELRREYEEEISKVE). Ser134 bears the Phosphoserine mark. A UMI motif motif is present at residues 143–151 (EEYIQRLLA). Disordered regions lie at residues 149–179 (LLAE…EELA) and 193–291 (NILA…QGPE). Positions 157–179 (EKRRTERRRSEMEEQLRGDEELA) are enriched in basic and acidic residues. The MIU motif 1 signature appears at 168–191 (MEEQLRGDEELARRLSTSINSNYE). Phosphoserine is present on Ser197. Lys210 is covalently cross-linked (Glycyl lysine isopeptide (Lys-Gly) (interchain with G-Cter in SUMO2)). Residues 242–259 (KTEHGEDMCKSKETDSSD) are compositionally biased toward basic and acidic residues. Residues 275–288 (PTHSPQTCPETQGQ) are compositionally biased toward polar residues. Thr348 and Thr361 each carry phosphothreonine. Phosphoserine is present on residues Ser413 and Ser414. The MIU motif 2 signature appears at 438 to 461 (RHKQEEQDRLLALQLQKEADKEKM). The disordered stretch occupies residues 455–564 (EADKEKMVPN…QKSILQMFQR (110 aa)). The short motif at 465–476 (RQKGSPDQYQLR) is the LR motif 2 element. Polar residues predominate over residues 466-480 (QKGSPDQYQLRTSSP). Position 469 is a phosphoserine (Ser469). Basic and acidic residues predominate over residues 491–515 (NVKDRNSPKQTADRSKSQRSRKGEY). Polar residues-rich tracts occupy residues 519 to 531 (FEST…NGTK) and 555 to 564 (QKSILQMFQR). Lys524 participates in a covalent cross-link: Glycyl lysine isopeptide (Lys-Gly) (interchain with G-Cter in SUMO2).

Belongs to the RNF168 family. Monomer. Interacts with UBE2N/UBC13. Sumoylated with SUMO1 by PIAS4 in response to double-strand breaks (DSBs). Post-translationally, ubiquitinated.

The protein resides in the nucleus. The catalysed reaction is S-ubiquitinyl-[E2 ubiquitin-conjugating enzyme]-L-cysteine + [acceptor protein]-L-lysine = [E2 ubiquitin-conjugating enzyme]-L-cysteine + N(6)-ubiquitinyl-[acceptor protein]-L-lysine.. The protein operates within protein modification; protein ubiquitination. Functionally, E3 ubiquitin-protein ligase required for accumulation of repair proteins to sites of DNA damage. Acts with UBE2N/UBC13 to amplify the RNF8-dependent histone ubiquitination. Recruited to sites of DNA damage at double-strand breaks (DSBs) by binding to ubiquitinated histone H2A and H2AX and amplifies the RNF8-dependent H2A ubiquitination, promoting the formation of 'Lys-63'-linked ubiquitin conjugates. This leads to concentrate ubiquitinated histones H2A and H2AX at DNA lesions to the threshold required for recruitment of TP53BP1 and BRCA1. Also recruited at DNA interstrand cross-links (ICLs) sites and promotes accumulation of 'Lys-63'-linked ubiquitination of histones H2A and H2AX, leading to recruitment of FAAP20 and Fanconi anemia (FA) complex, followed by interstrand cross-link repair. H2A ubiquitination also mediates the ATM-dependent transcriptional silencing at regions flanking DSBs in cis, a mechanism to avoid collision between transcription and repair intermediates. Also involved in class switch recombination in immune system, via its role in regulation of DSBs repair. Following DNA damage, promotes the ubiquitination and degradation of JMJD2A/KDM4A in collaboration with RNF8, leading to unmask H4K20me2 mark and promote the recruitment of TP53BP1 at DNA damage sites. Not able to initiate 'Lys-63'-linked ubiquitination in vitro; possibly due to partial occlusion of the UBE2N/UBC13-binding region. Catalyzes monoubiquitination of 'Lys-13' and 'Lys-15' of nucleosomal histone H2A (H2AK13Ub and H2AK15Ub, respectively). This is E3 ubiquitin-protein ligase RNF168 from Rattus norvegicus (Rat).